A 354-amino-acid polypeptide reads, in one-letter code: MQTYGNPDVTYGWWAGNSRVTNRAGKFIAAHAGHTGLISFAAGASTLWELARFDPSIAMGHQSSIFLAHLASIGIGFDDAGVWTGANVASVAIVHIIASLVYAGGALSHSLLFDGDLADGPGPTTQKFKLEWDNPDNLTFILGHHLIFFGVACIAFVEWARIHGIYDPAIGAVRQVEYNLNLTNIWNHQFDFLAIDNLEDVLGGHAFLAFVEITGGAFHIATKQVGEYTEFKGAGILSAEAVLSFSLAGIGWMAIVAAFWCATNTTVYPEPWFGEPLALKFGISPYWIDTVEVSESTALAGHTTRAALTNVHYYFGFFFLQGHLWHAIRALGFDFRRVTNAVAGLDRAQITLND.

Helical transmembrane passes span 27–47 (FIAAHAGHTGLISFAAGASTL), 65–85 (IFLAHLASIGIGFDDAGVWTG), 88–108 (VASVAIVHIIASLVYAGGALS), 201–221 (VLGGHAFLAFVEITGGAFHIA), 241–261 (AVLSFSLAGIGWMAIVAAFWC), and 308–328 (LTNVHYYFGFFFLQGHLWHAI).

It belongs to the PsbB/PsbC family. IsiA/Pcb subfamily. In terms of assembly, the antenna complex consists of divinyl chlorophylls (a and b) and divinyl chlorophyll a/b binding proteins and binds more divinyl chlorophyll b than does the antenna complex from high-light-adapted Prochlorococcus. Divinyl chlorophyll a serves as cofactor. Divinyl chlorophyll b is required as a cofactor.

The protein localises to the cellular thylakoid membrane. The antenna complex functions as a light receptor, it captures and delivers excitation energy to photosystems II and I. The Prochlorales pcb genes are not related to higher plant LHCs. This is Divinyl chlorophyll a/b light-harvesting protein PcbG (pcbG) from Prochlorococcus marinus (strain NATL2A).